Here is a 3374-residue protein sequence, read N- to C-terminus: Abnormal spindle-like microcephaly-associated protein homolog (3374 aa).

Ser212, Ser215, Ser300, and Ser325 each carry phosphoserine. Residues 492–518 (SSKNIVTPPCKAASVARKRKSKGHTGD) form a disordered region. A Phosphoserine modification is found at Ser540. Residues 855–991 (KASXDILLAF…LLWKIALAFQ (137 aa)) enclose the Calponin-homology (CH) 1 domain. Residues 992–1013 (VDISLNLDQLKEEIDFLKKTQS) are a coiled coil. Ser1038 carries the phosphoserine modification. Residues 1045–1196 (SESVKLLMDW…YLSFLCARLL (152 aa)) enclose the Calponin-homology (CH) 2 domain. IQ domains follow at residues 1201–1230 (ETRA…RDKA), 1282–1313 (HSKS…IILQ), 1472–1503 (KRAA…VLQS), 1567–1596 (TRSA…AVVK), 1590–1619 (ILTA…ATVK), 1613–1642 (LKKA…IAQQ), 1647–1678 (LRAS…VLLQ), 1720–1749 (VRRA…AALK), 1743–1772 (QSAA…SALK), 1793–1822 (TRTA…AAVK), 1816–1847 (EHEA…SVIQ), 1866–1897 (LRRA…IIIQ), 1939–1968 (TKGA…AATT), 1962–1993 (MHQA…VIIQ), 2012–2043 (VKKA…TLIK), 2035–2066 (MHMA…IVIQ), 2085–2116 (TLKA…TLIQ), 2108–2137 (MRTA…VTKT), 2158–2189 (LRRS…AVIQ), 2181–2212 (MHSA…VWVQ), 2230–2261 (LQKA…TVLQ), 2253–2284 (MRRA…QVIQ), 2303–2334 (QXRS…TLIQ), 2326–2357 (MHAS…VFVQ), 2376–2407 (LKKA…ALIQ), 2399–2430 (MHRA…VLIQ), 2449–2480 (WRHS…VIIQ), 2472–2503 (KHRA…KVIQ), 2542–2573 (QHQA…VFVQ), 2583–2612 (RTQA…AATR), 2606–2637 (MHLA…VVIQ), 2656–2685 (IQKS…EKMA), 2732–2763 (QRKA…QIQS), 2777–2806 (QKRA…AAVG), 2827–2856 (IRSS…STIK), 2850–2881 (LKDS…RIQA), 2872–2903 (EVKA…RIIQ), 2947–2976 (RHQA…AALT), 2997–3028 (LKKS…RLLH), 3099–3128 (HSRA…RIAK), and 3122–3153 (LNKR…IRQR).

It is found in the cytoplasm. Its subcellular location is the cytoskeleton. The protein localises to the spindle. It localises to the nucleus. Probable role in mitotic spindle regulation and coordination of mitotic processes. May have a preferential role in regulating neurogenesis. The sequence is that of Abnormal spindle-like microcephaly-associated protein homolog (ASPM) from Ovis aries (Sheep).